Here is a 120-residue protein sequence, read N- to C-terminus: NADH-ubiquinone oxidoreductase chain 3 (120 aa).

A run of 3 helical transmembrane segments spans residues 10–30, 62–82, and 89–109; these read ILIL…LGYF, FYLV…LFPF, and MTLF…IGFI.

This sequence belongs to the complex I subunit 3 family.

The protein localises to the mitochondrion membrane. It catalyses the reaction a ubiquinone + NADH + 5 H(+)(in) = a ubiquinol + NAD(+) + 4 H(+)(out). In terms of biological role, core subunit of the mitochondrial membrane respiratory chain NADH dehydrogenase (Complex I) that is believed to belong to the minimal assembly required for catalysis. Complex I functions in the transfer of electrons from NADH to the respiratory chain. The immediate electron acceptor for the enzyme is believed to be ubiquinone. The protein is NADH-ubiquinone oxidoreductase chain 3 (nad3) of Dictyostelium citrinum (Slime mold).